The following is a 196-amino-acid chain: UPF0319 protein VV0948 (196 aa).

The N-terminal stretch at 1-19 (MKKMMILSALALFSSSLFA) is a signal peptide.

The protein belongs to the UPF0319 family.

This is UPF0319 protein VV0948 from Vibrio vulnificus (strain YJ016).